The following is a 473-amino-acid chain: Sensor histidine kinase YclK (473 aa).

The Cytoplasmic segment spans residues Met1 to Gln9. Residues Leu10–Ser30 form a helical membrane-spanning segment. Over His31–Asn164 the chain is Extracellular. The chain crosses the membrane as a helical span at residues Leu165–Leu185. The Cytoplasmic portion of the chain corresponds to Ser186–Gln473. Residues Lys187–Asp239 form the HAMP domain. Residues Asp254–Ala470 enclose the Histidine kinase domain. Phosphohistidine; by autocatalysis is present on His257.

The protein resides in the cell membrane. It carries out the reaction ATP + protein L-histidine = ADP + protein N-phospho-L-histidine.. Could be member of the two-component regulatory system YclK/YclJ. Potentially phosphorylates YclJ. The polypeptide is Sensor histidine kinase YclK (yclK) (Bacillus subtilis (strain 168)).